We begin with the raw amino-acid sequence, 126 residues long: Small ribosomal subunit protein uS12 (126 aa).

D89 bears the 3-methylthioaspartic acid mark.

Belongs to the universal ribosomal protein uS12 family. As to quaternary structure, part of the 30S ribosomal subunit. Contacts proteins S8 and S17. May interact with IF1 in the 30S initiation complex.

In terms of biological role, with S4 and S5 plays an important role in translational accuracy. Functionally, interacts with and stabilizes bases of the 16S rRNA that are involved in tRNA selection in the A site and with the mRNA backbone. Located at the interface of the 30S and 50S subunits, it traverses the body of the 30S subunit contacting proteins on the other side and probably holding the rRNA structure together. The combined cluster of proteins S8, S12 and S17 appears to hold together the shoulder and platform of the 30S subunit. In Carboxydothermus hydrogenoformans (strain ATCC BAA-161 / DSM 6008 / Z-2901), this protein is Small ribosomal subunit protein uS12.